The chain runs to 218 residues: UPF0502 protein VS_II0353 (218 aa).

Belongs to the UPF0502 family.

The protein is UPF0502 protein VS_II0353 of Vibrio atlanticus (strain LGP32) (Vibrio splendidus (strain Mel32)).